The chain runs to 269 residues: RBPJ-interacting and tubulin-associated protein 1 (269 aa).

The short motif at Val-5 to Val-17 is the Nuclear export signal element. Disordered stretches follow at residues Gly-67–Pro-94 and Pro-145–Lys-269. Low complexity predominate over residues Ser-79–Thr-93. The Nuclear localization signal motif lies at Leu-92–Ser-108. The tract at residues Trp-128 to Pro-156 is interaction with RBPJ/RBPSUH. The interval Pro-156–Lys-269 is interaction with tubulin. 2 stretches are compositionally biased toward polar residues: residues Leu-202–Thr-220 and Val-247–Lys-269.

It belongs to the RITA family. Interacts with RBPJ/RBPSUH.

It localises to the cytoplasm. It is found in the nucleus. The protein localises to the cytoskeleton. Its subcellular location is the microtubule organizing center. The protein resides in the centrosome. Its function is as follows. Tubulin-binding protein that acts as a negative regulator of Notch signaling pathway. Shuttles between the cytoplasm and the nucleus and mediates the nuclear export of RBPJ/RBPSUH, thereby preventing the interaction between RBPJ/RBPSUH and NICD product of Notch proteins (Notch intracellular domain), leading to down-regulate Notch-mediated transcription. May play a role in neurogenesis. The protein is RBPJ-interacting and tubulin-associated protein 1 (RITA1) of Bos taurus (Bovine).